Consider the following 343-residue polypeptide: Heat-inducible transcription repressor HrcA (343 aa).

It belongs to the HrcA family.

Functionally, negative regulator of class I heat shock genes (grpE-dnaK-dnaJ and groELS operons). Prevents heat-shock induction of these operons. The polypeptide is Heat-inducible transcription repressor HrcA (Caldanaerobacter subterraneus subsp. tengcongensis (strain DSM 15242 / JCM 11007 / NBRC 100824 / MB4) (Thermoanaerobacter tengcongensis)).